Reading from the N-terminus, the 105-residue chain is TMEM14 protein homolog YJR085C (105 aa).

The next 3 membrane-spanning stretches (helical) occupy residues 26–46, 53–73, and 77–97; these read IPSL…GYLL, GLEM…IRGM, and FTKP…YYYY.

Belongs to the TMEM14 family.

Its subcellular location is the mitochondrion. The protein resides in the membrane. This Saccharomyces cerevisiae (strain ATCC 204508 / S288c) (Baker's yeast) protein is TMEM14 protein homolog YJR085C.